The chain runs to 276 residues: UPF0328 protein ECU01_0090/ECU01_1520/ECU02_1550/ECU08_0020 (276 aa).

The tract at residues 1 to 24 (MGIIDVQRSHLTATPSKERDAPAH) is disordered.

It belongs to the UPF0328 family.

The chain is UPF0328 protein ECU01_0090/ECU01_1520/ECU02_1550/ECU08_0020 from Encephalitozoon cuniculi (strain GB-M1) (Microsporidian parasite).